Consider the following 185-residue polypeptide: Probable chorismate pyruvate-lyase (185 aa).

Positions 75, 113, and 170 each coordinate substrate.

Belongs to the UbiC family.

Its subcellular location is the cytoplasm. The catalysed reaction is chorismate = 4-hydroxybenzoate + pyruvate. It functions in the pathway cofactor biosynthesis; ubiquinone biosynthesis. In terms of biological role, removes the pyruvyl group from chorismate, with concomitant aromatization of the ring, to provide 4-hydroxybenzoate (4HB) for the ubiquinone pathway. This chain is Probable chorismate pyruvate-lyase, found in Coxiella burnetii (strain RSA 493 / Nine Mile phase I).